Reading from the N-terminus, the 894-residue chain is Exocyst complex component 1 (894 aa).

2 coiled-coil regions span residues 152 to 199 (GDEE…LQVL) and 205 to 259 (QSIM…NHLI). A disordered region spans residues 437–495 (SKESKKFATLPRKESAVKQETESLHGSSGKLTGSTSSLNKLSVQSSGSRRSQSSSLLDM). The segment covering 438 to 459 (KESKKFATLPRKESAVKQETES) has biased composition (basic and acidic residues). Low complexity predominate over residues 460–491 (LHGSSGKLTGSTSSLNKLSVQSSGSRRSQSSS). Ser470 bears the Phosphoserine mark. Residue Thr471 is modified to Phosphothreonine. Phosphoserine occurs at positions 473, 487, and 501.

This sequence belongs to the SEC3 family. In terms of assembly, the exocyst complex is composed of EXOC1, EXOC2, EXOC3, EXOC4, EXOC5, EXOC6, EXOC7 and EXOC8. Interacts with EEF1A1. Interacts with SLC6A9; interaction increases the transporter capacity of SLC6A9 probably by promoting its insertion into the cell membrane.

The protein localises to the midbody. The protein resides in the midbody ring. It is found in the cytoplasm. It localises to the perinuclear region. Its subcellular location is the cell membrane. Its function is as follows. Component of the exocyst complex involved in the docking of exocytic vesicles with fusion sites on the plasma membrane. This Mus musculus (Mouse) protein is Exocyst complex component 1 (Exoc1).